Consider the following 1714-residue polypeptide: Latrophilin Cirl (1714 aa).

Over 1–765 the chain is Extracellular; sequence MSSIDISGRY…LFTMFDGNMR (765 aa). The SUEL-type lectin domain maps to 26–115; sequence ACEGKKLTIE…KYLEAHYQCI (90 aa). N-linked (GlcNAc...) asparagine glycosylation is present at Asn-143. Positions 183–302 are disordered; it reads PPHTVTHSTP…GSPASGNNSV (120 aa). The segment covering 186–198 has biased composition (low complexity); that stretch reads TVTHSTPSSSTVP. Over residues 244-262 the composition is skewed to polar residues; the sequence is PSSKLPSAGNATAPSNTRI. N-linked (GlcNAc...) asparagine glycosylation is present at Asn-253. Composition is skewed to low complexity over residues 272–282 and 290–301; these read DDGTLLTTKSS and ASNGSPASGNNS. Residues Asn-299, Asn-338, Asn-395, Asn-652, Asn-701, and Asn-728 are each glycosylated (N-linked (GlcNAc...) asparagine). The disordered stretch occupies residues 373–397; that stretch reads YDEYDDDPSSTTPAPSGGDCLHNSS. The 195-residue stretch at 558–752 folds into the GAIN-B domain; it reads RSVVQKVKNI…AILMDVVDEH (195 aa). Cystine bridges form between Cys-707–Cys-734 and Cys-722–Cys-736. A GPS region spans residues 707-752; it reads CVFWNYIDHAWSANGCSLESTNRTHSVCSCNHLTNFAILMDVVDEH. Residues 766-786 traverse the membrane as a helical segment; it reads VFIYISIAICVVFIVIALLTL. The Cytoplasmic segment spans residues 787–799; sequence KLFNGVFVKSART. The chain crosses the membrane as a helical span at residues 800-820; sequence TIYTSIYVCLLAIELLFLLGI. The Extracellular segment spans residues 821–826; the sequence is EQTETS. A helical membrane pass occupies residues 827–847; the sequence is IFCGFITVFLHCAILSGAAWF. Residues 848 to 873 are Cytoplasmic-facing; it reads CYEAFHSYYTLTSDELLVEVDQTPKV. A helical membrane pass occupies residues 874–894; it reads NWYYLLSYGLSVSVVAISVAI. Topologically, residues 895 to 911 are extracellular; sequence NPSTYTQNDYCVLMEAN. A helical transmembrane segment spans residues 912–932; that stretch reads ILFYATFVAPVLIFFVAAIGY. The Cytoplasmic portion of the chain corresponds to 933–966; that stretch reads TFLSWIIMCRKSCTGLKTKEHTRLASVRFDIRCS. A helical transmembrane segment spans residues 967 to 987; that stretch reads FVFLLLLSAVWCSAYFYLRGA. The Extracellular segment spans residues 988 to 994; that stretch reads KTDEDTT. A helical membrane pass occupies residues 995 to 1015; it reads TIYGYCFICFNTLLGLYIFVF. Residues 1016–1714 are Cytoplasmic-facing; it reads HCIQNEKIRR…VRCYLEPLAK (699 aa). A phosphoserine mark is found at Ser-1155, Ser-1245, and Ser-1252. Disordered stretches follow at residues 1229-1253, 1268-1287, 1293-1354, 1447-1536, and 1551-1694; these read PNSQ…LHSR, KTKQ…LDPP, AFYQ…PPPH, GGGS…DERM, and FQRQ…QQRH. Over residues 1296–1315 the composition is skewed to low complexity; that stretch reads QQQQQMRRQQQQQQQQQQQQ. Phosphoserine occurs at positions 1317 and 1318. Composition is skewed to low complexity over residues 1330–1348 and 1453–1478; these read LHLQ…QQQL and GGSV…QQQR. Composition is skewed to acidic residues over residues 1486–1500 and 1510–1523; these read DDDD…DEAT and CDDD…DLDD. Residues 1524 to 1536 are compositionally biased toward basic and acidic residues; the sequence is DAHKLPPQSDERM. The segment covering 1565–1580 has biased composition (low complexity); it reads GALPPGVAPGAGSAGP. Over residues 1644–1659 the composition is skewed to polar residues; sequence QTPAQKRQQLQKLSPQ. A compositionally biased stretch (low complexity) spans 1660-1675; it reads STTSSSSHTSHSNLQP. Over residues 1679–1693 the composition is skewed to basic residues; the sequence is PLTHQHPHPPQHQQR.

This sequence belongs to the G-protein coupled receptor 2 family. LN-TM7 subfamily. As to quaternary structure, forms a heterodimer, consisting of a large extracellular region non-covalently linked to a seven-transmembrane moiety. Post-translationally, proteolytically cleaved into 2 subunits, an extracellular subunit and a seven-transmembrane subunit.

It localises to the cell membrane. In Drosophila ananassae (Fruit fly), this protein is Latrophilin Cirl.